The following is a 180-amino-acid chain: Oligoribonuclease (180 aa).

The Exonuclease domain maps to 7-170 (LIWIDLEMTG…DDIRESIAEL (164 aa)). The active site involves Y128.

This sequence belongs to the oligoribonuclease family.

Its subcellular location is the cytoplasm. In terms of biological role, 3'-to-5' exoribonuclease specific for small oligoribonucleotides. The protein is Oligoribonuclease of Pseudomonas aeruginosa (strain UCBPP-PA14).